The sequence spans 29 residues: Kunitz-type serine protease inhibitor RsTIQ7 (29 aa).

The 21-residue stretch at 6 to 26 folds into the BPTI/Kunitz inhibitor domain; that stretch reads QCVPTADPGPCKAYIPMWWYN.

In terms of biological role, serine protease inhibitor. Inhibits trypsin, elastase, plasmin and kallikrein. This is Kunitz-type serine protease inhibitor RsTIQ7 from Rhipicephalus sanguineus (Brown dog tick).